Here is a 608-residue protein sequence, read N- to C-terminus: Epsin-3 (608 aa).

A 1,2-diacyl-sn-glycero-3-phospho-(1D-myo-inositol-4,5-bisphosphate)-binding residues include Arg8, Lys11, Arg25, Asn30, Arg63, and His73. In terms of domain architecture, ENTH spans 12–144; the sequence is NIVHNYSEAE…KDEERLRQER (133 aa). Disordered stretches follow at residues 150 to 266 and 281 to 475; these read TKER…QSSI and STHC…GPSA. Positions 174-189 are enriched in low complexity; the sequence is GSPSSYTSASSSPRYA. Phosphoserine is present on residues Ser184 and Ser185. The 20-residue stretch at 202–221 folds into the UIM domain; the sequence is EEELQLQLALAMSREEAEKG. 2 stretches are compositionally biased toward basic and acidic residues: residues 214-229 and 240-260; these read SREEAEKGGRSWKGDD and GQRRRDREPEREERKEEEKLK. Tandem repeats lie at residues 287 to 289, 310 to 312, 337 to 339, 353 to 355, 370 to 372, 495 to 497, and 508 to 510. Residues 287–372 form a 5 X 3 AA repeats of [DE]-P-W region; that stretch reads DPWDIPGLRP…KLPSTGVDPW (86 aa). Residues 346-363 are compositionally biased toward pro residues; it reads PSGPPITDPWAPSSPTPK. The 3 X 3 AA repeats of N-P-F stretch occupies residues 495-607; it reads NPFLTGLSAP…LPPQAGTNPF (113 aa). Disordered stretches follow at residues 498–530 and 575–608; these read LTGLSAPSPTNPFGAGEQGRPTLNQMRTGSPAL and GAFAPPPASLPQPLLPTSDPVGPLPPQAGTNPFL. Over residues 578-588 the composition is skewed to pro residues; it reads APPPASLPQPL. Repeat unit 3 spans residues 605-607; it reads NPF.

This sequence belongs to the epsin family.

The protein localises to the cytoplasm. It is found in the cell cortex. Its subcellular location is the perinuclear region. The protein resides in the cytoplasmic vesicle. It localises to the clathrin-coated vesicle. The protein localises to the nucleus. The protein is Epsin-3 (Epn3) of Rattus norvegicus (Rat).